The primary structure comprises 215 residues: NAD(P)H-hydrate epimerase (215 aa).

The YjeF N-terminal domain maps to 10–211 (AQRYDAHATN…DIGIYAQDRV (202 aa)). A (6S)-NADPHX-binding site is contributed by 58–62 (NNGGD). K(+)-binding residues include Asn59 and Asp121. (6S)-NADPHX is bound by residues 125–131 (GVGLTRD) and Asp154. A K(+)-binding site is contributed by Ser157.

This sequence belongs to the NnrE/AIBP family. It depends on K(+) as a cofactor.

The enzyme catalyses (6R)-NADHX = (6S)-NADHX. It carries out the reaction (6R)-NADPHX = (6S)-NADPHX. Its function is as follows. Catalyzes the epimerization of the S- and R-forms of NAD(P)HX, a damaged form of NAD(P)H that is a result of enzymatic or heat-dependent hydration. This is a prerequisite for the S-specific NAD(P)H-hydrate dehydratase to allow the repair of both epimers of NAD(P)HX. The polypeptide is NAD(P)H-hydrate epimerase (Levilactobacillus brevis (strain ATCC 367 / BCRC 12310 / CIP 105137 / JCM 1170 / LMG 11437 / NCIMB 947 / NCTC 947) (Lactobacillus brevis)).